Consider the following 292-residue polypeptide: High-affinity heme uptake system protein IsdE (292 aa).

The N-terminal stretch at methionine 1–serine 19 is a signal peptide. Cysteine 20 carries the N-palmitoyl cysteine lipid modification. A lipid anchor (S-diacylglycerol cysteine) is attached at cysteine 20. The 257-residue stretch at arginine 35 to lysine 291 folds into the Fe/B12 periplasmic-binding domain. Heme-binding residues include valine 41, alanine 42, serine 60, tyrosine 61, methionine 78, and histidine 229.

It belongs to the bacterial solute-binding protein 8 family. Heme b is required as a cofactor.

It is found in the cell membrane. Functionally, involved in heme (porphyrin) scavenging. Binds Fe(2+) and Fe(3+) heme but the largest fraction is Fe(2+) heme. Functions as a high-affinity heme binding protein and probably has a role in relaying heme-iron from cell wall-anchored isd proteins receptors to the probable permease IsdF. The protein is High-affinity heme uptake system protein IsdE (isdE) of Staphylococcus aureus (strain MRSA252).